The primary structure comprises 420 residues: Na(+)/H(+) antiporter NhaA (420 aa).

The next 11 helical transmembrane spans lie at 4 to 24 (VWNFITGYSLLLIGGAIIALI), 70 to 90 (DLLMALFFAIAAKEVWEAVIL), 104 to 124 (LVATLGGMVGPISIYLGIAYF), 132 to 152 (AVANGWAIPTATDIAFSYLVG), 165 to 185 (FLLLLAIADDAAGLLILAIFY), 192 to 212 (PAWLLLSFGAALGVYVLANWL), 233 to 250 (LSFWPYALAGCASWYGFM), 299 to 319 (VEIILGLFGLMNAGVAFSAMG), 323 to 343 (WLVLAGLLIGKPVGIFLFGWL), 361 to 381 (LVVIGCVAAIGFTVSLFVASV), and 395 to 415 (GALFSFGAAAVSIIVGKLTQV).

Belongs to the NhaA Na(+)/H(+) (TC 2.A.33) antiporter family.

Its subcellular location is the cell inner membrane. It carries out the reaction Na(+)(in) + 2 H(+)(out) = Na(+)(out) + 2 H(+)(in). Na(+)/H(+) antiporter that extrudes sodium in exchange for external protons. The sequence is that of Na(+)/H(+) antiporter NhaA from Jannaschia sp. (strain CCS1).